A 423-amino-acid polypeptide reads, in one-letter code: Phosphoribosylamine--glycine ligase (423 aa).

The 206-residue stretch at 107–312 folds into the ATP-grasp domain; the sequence is KAFADRYGLP…LVPYLVACAN (206 aa). 133 to 193 is an ATP binding site; sequence LELFEPPYVI…EEFLEGEIGS (61 aa). Glutamate 270, glutamate 282, and asparagine 284 together coordinate Mg(2+). 3 residues coordinate Mn(2+): glutamate 270, glutamate 282, and asparagine 284.

Belongs to the GARS family. Mg(2+) is required as a cofactor. Requires Mn(2+) as cofactor.

The catalysed reaction is 5-phospho-beta-D-ribosylamine + glycine + ATP = N(1)-(5-phospho-beta-D-ribosyl)glycinamide + ADP + phosphate + H(+). It functions in the pathway purine metabolism; IMP biosynthesis via de novo pathway; N(1)-(5-phospho-D-ribosyl)glycinamide from 5-phospho-alpha-D-ribose 1-diphosphate: step 2/2. This chain is Phosphoribosylamine--glycine ligase, found in Phenylobacterium zucineum (strain HLK1).